A 247-amino-acid polypeptide reads, in one-letter code: TM2 domain-containing protein 3 (247 aa).

A signal peptide spans 1–25 (MIPMMTLKRVCRVLLFITQMYVLSG). Topologically, residues 26–179 (RGFLSFEYSE…RTFPKMLYCN (154 aa)) are extracellular. N-linked (GlcNAc...) asparagine glycosylation is found at asparagine 87, asparagine 99, asparagine 139, asparagine 155, asparagine 169, and asparagine 179. Residues 180–200 (WTGGYKWSTALALSITLGGFG) form a helical membrane-spanning segment. The 49-residue stretch at 183-231 (GYKWSTALALSITLGGFGADRFYLGQWREGLGKLFSFGGLGIWTLIDVF) folds into the TM2 domain. Over 201–215 (ADRFYLGQWREGLGK) the chain is Cytoplasmic. A helical membrane pass occupies residues 216 to 236 (LFSFGGLGIWTLIDVFLISVG). Over 237-247 (YVGPADGSLYI) the chain is Extracellular.

It belongs to the TM2 family.

Its subcellular location is the membrane. The chain is TM2 domain-containing protein 3 (tm2d3) from Xenopus tropicalis (Western clawed frog).